A 253-amino-acid polypeptide reads, in one-letter code: Flap endonuclease Xni (253 aa).

Asp104 contributes to the Mg(2+) binding site. The 5'-3' exonuclease domain maps to 160–250 (VAPQQLTDFW…HGNLQQLRLN (91 aa)). K(+) contacts are provided by Leu171, Ala172, Pro180, Ile182, and Ile185. The interaction with DNA stretch occupies residues 184 to 189 (GIGAKT).

It belongs to the Xni family. Mg(2+) serves as cofactor. The cofactor is K(+).

Has flap endonuclease activity. During DNA replication, flap endonucleases cleave the 5'-overhanging flap structure that is generated by displacement synthesis when DNA polymerase encounters the 5'-end of a downstream Okazaki fragment. The polypeptide is Flap endonuclease Xni (Edwardsiella ictaluri (strain 93-146)).